A 393-amino-acid polypeptide reads, in one-letter code: Neuroplastin (393 aa).

The signal sequence occupies residues 1–28 (MSGSSLPGALALSLLLVSGSLLPGPGAA). Ig-like domains lie at 29–134 (QNAG…PSIT), 148–234 (PRIV…IEVK), and 237–327 (PDIT…ASVS). Over 29–338 (QNAGFVKSPM…VLRVRSHLAP (310 aa)) the chain is Extracellular. Residues Cys52 and Cys116 are joined by a disulfide bond. A narpin; mediates binding with FGFR1 and has antidepressant-like activity region spans residues 149–161 (RIVTSEEVIIRDS). Cys169 and Cys217 are joined by a disulfide. Residues Asn170, Asn196, Asn228, Asn283, Asn295, and Asn316 are each glycosylated (N-linked (GlcNAc...) asparagine). Residues Cys258 and Cys315 are joined by a disulfide bond. A helical membrane pass occupies residues 339-359 (LWPFLGILAEIIILVVIIVVY). At 360–393 (EKRKRPDEVPDAGPMKTNSTNNHKDKNLRQRNTN) the chain is on the cytoplasmic side. Residues 366–393 (DEVPDAGPMKTNSTNNHKDKNLRQRNTN) are disordered.

As to quaternary structure, interacts with ATP2B1; this interaction stabilizes ATP2B1 and increases ATPase activity; this interaction controls T cell calcium homeostasis following T cell activation. Interacts with XKR8; promoting its localization at the cell membrane. Isoform 1 and isoform 2 are N-glycosylated. As to expression, isoform 1 is ubiquitously expressed. Isoform 2 is brain-specific. In brain isoform 2 is highly expressed in hippocampus and cerebral cortex and weakly in cerebellum and lower brain regions. In the hippocampus isoform 2 is found in the dentate gyrus and CA1-CA4, the striatum oriens of CA3 shows the higher level.

The protein resides in the cell membrane. Its subcellular location is the postsynaptic density. Probable homophilic and heterophilic cell adhesion molecule involved in long term potentiation at hippocampal excitatory synapses through activation of p38MAPK. May also regulate neurite outgrowth by activating the FGFR1 signaling pathway. May play a role in synaptic plasticity. Also acts as a chaperone for ATP2B1; stabilizes ATP2B1 and increases its ATPase activity. Promotes localization of XKR8 at the cell membrane. The chain is Neuroplastin (Nptn) from Rattus norvegicus (Rat).